The following is a 754-amino-acid chain: Probable beta-glucosidase D (754 aa).

The first 20 residues, 1–20, serve as a signal peptide directing secretion; that stretch reads MKVLSFIVAAALLGLTGASS. Asn-66, Asn-69, and Asn-186 each carry an N-linked (GlcNAc...) asparagine glycan. A disordered region spans residues 186 to 206; the sequence is NRTGGGGGGGGDSGSAPYSSN. Residues 188-198 are compositionally biased toward gly residues; it reads TGGGGGGGGDS. N-linked (GlcNAc...) asparagine glycosylation occurs at Asn-239. Residue Asp-267 is part of the active site. N-linked (GlcNAc...) asparagine glycosylation is found at Asn-301, Asn-345, Asn-443, Asn-512, Asn-534, Asn-573, Asn-588, Asn-655, and Asn-745.

The protein belongs to the glycosyl hydrolase 3 family.

It is found in the secreted. The enzyme catalyses Hydrolysis of terminal, non-reducing beta-D-glucosyl residues with release of beta-D-glucose.. It functions in the pathway glycan metabolism; cellulose degradation. Beta-glucosidases are one of a number of cellulolytic enzymes involved in the degradation of cellulosic biomass. Catalyzes the last step releasing glucose from the inhibitory cellobiose. The chain is Probable beta-glucosidase D (bglD) from Aspergillus niger (strain ATCC MYA-4892 / CBS 513.88 / FGSC A1513).